The primary structure comprises 346 residues: D-alanine--D-alanine ligase (346 aa).

The 195-residue stretch at 133–327 (KLYAKSVGVK…ALADQISLEK (195 aa)) folds into the ATP-grasp domain. 159–211 (LSFPCIIKPARLGSSIGISIVKDEKDLEYAKDVGFEFDNDLVVEEFKNNIKEY) serves as a coordination point for ATP. Mg(2+)-binding residues include Asp284, Glu296, and Asn298.

Belongs to the D-alanine--D-alanine ligase family. Requires Mg(2+) as cofactor. The cofactor is Mn(2+).

The protein resides in the cytoplasm. It carries out the reaction 2 D-alanine + ATP = D-alanyl-D-alanine + ADP + phosphate + H(+). It participates in cell wall biogenesis; peptidoglycan biosynthesis. Cell wall formation. This is D-alanine--D-alanine ligase from Campylobacter jejuni subsp. jejuni serotype O:2 (strain ATCC 700819 / NCTC 11168).